We begin with the raw amino-acid sequence, 113 residues long: Large ribosomal subunit protein bL19m (113 aa).

The protein belongs to the bacterial ribosomal protein bL19 family.

The protein localises to the mitochondrion. The chain is Large ribosomal subunit protein bL19m (RPL19) from Reclinomonas americana.